The following is a 457-amino-acid chain: Peptidyl-prolyl cis-trans isomerase FKBP5 (457 aa).

At methionine 1 the chain carries N-acetylmethionine. Residues methionine 1–arginine 11 are compositionally biased toward basic and acidic residues. The interval methionine 1–lysine 28 is disordered. Lysine 28 is modified (N6-acetyllysine). 2 PPIase FKBP-type domains span residues glycine 50–lysine 138 and glycine 165–glutamate 251. TPR repeat units lie at residues alanine 268–glutamate 301, leucine 317–asparagine 350, and glutamate 351–asparagine 384. The interval glutamate 424 to valine 457 is disordered. Serine 445 carries the post-translational modification Phosphoserine. The span at alanine 447–valine 457 shows a compositional bias: basic and acidic residues.

Part of a heteromultimeric cytoplasmic complex with HSP90AA1, HSPA1A/HSPA1B and steroid receptors. Upon ligand binding dissociates from the complex and FKBP4 takes its place. Interacts with functionally mature heterooligomeric progesterone receptor complexes along with HSP90 and TEBP. Interacts with NR3C1. Interacts with Akt/AKT1 and PHLPP1; enhancing dephosphorylation and subsequent activation of Akt/AKT1. Interacts with IFI44L; this interaction modulates the kinase activity of IKBKB and IKBKE. Interacts with IKBKB and IKBKE. In terms of processing, acetylation impairs ability to promote interaction between Akt/AKT1 and PHLPP1. Deacetylation by SIRT7 promotes interaction between Akt/AKT1 and PHLPP1, leading to suppress Akt/AKT1 activation. Post-translationally, ubiquitinated, leading to degradation in a proteasome-dependent manner. Deubiquitinated by USP49, leading to stabilization.

The protein resides in the cytoplasm. It localises to the nucleus. It carries out the reaction [protein]-peptidylproline (omega=180) = [protein]-peptidylproline (omega=0). With respect to regulation, inhibited by both FK506 and rapamycin. Functionally, immunophilin protein with PPIase and co-chaperone activities. Component of unligated steroid receptors heterocomplexes through interaction with heat-shock protein 90 (HSP90). Plays a role in the intracellular trafficking of heterooligomeric forms of steroid hormone receptors maintaining the complex into the cytoplasm when unliganded. Acts as a regulator of Akt/AKT1 activity by promoting the interaction between Akt/AKT1 and PHLPP1, thereby enhancing dephosphorylation and subsequent activation of Akt/AKT1. Interacts with IKBKE and IKBKB which facilitates IKK complex assembly leading to increased IKBKE and IKBKB kinase activity, NF-kappaB activation, and IFN production. In Saguinus oedipus (Cotton-top tamarin), this protein is Peptidyl-prolyl cis-trans isomerase FKBP5 (FKBP5).